A 118-amino-acid polypeptide reads, in one-letter code: Non-specific lipid-transfer protein 1 (118 aa).

Positions methionine 1–alanine 20 are cleaved as a signal peptide. 4 disulfides stabilise this stretch: cysteine 29–cysteine 77, cysteine 39–cysteine 54, cysteine 55–cysteine 100, and cysteine 75–cysteine 114.

This sequence belongs to the plant LTP family.

Plant non-specific lipid-transfer proteins transfer phospholipids as well as galactolipids across membranes. May play a role in wax or cutin deposition in the cell walls of expanding epidermal cells and certain secretory tissues. The polypeptide is Non-specific lipid-transfer protein 1 (LTP1) (Sorghum bicolor (Sorghum)).